We begin with the raw amino-acid sequence, 410 residues long: Argininosuccinate synthase (410 aa).

Residues 13–21 (AYSGGLDTS) and Ala-40 contribute to the ATP site. L-citrulline contacts are provided by Tyr-91 and Ser-96. Gly-121 is an ATP binding site. Positions 123, 127, and 128 each coordinate L-aspartate. Position 127 (Asn-127) interacts with L-citrulline. Residues Arg-131, Ser-182, Ser-191, Glu-267, and Tyr-279 each coordinate L-citrulline.

It belongs to the argininosuccinate synthase family. Type 1 subfamily. Homotetramer.

It is found in the cytoplasm. It carries out the reaction L-citrulline + L-aspartate + ATP = 2-(N(omega)-L-arginino)succinate + AMP + diphosphate + H(+). Its pathway is amino-acid biosynthesis; L-arginine biosynthesis; L-arginine from L-ornithine and carbamoyl phosphate: step 2/3. The polypeptide is Argininosuccinate synthase (Gluconobacter oxydans (strain 621H) (Gluconobacter suboxydans)).